The sequence spans 262 residues: Pyridoxine 5'-phosphate synthase (262 aa).

Asn6 contacts 3-amino-2-oxopropyl phosphate. 8 to 9 (DH) contacts 1-deoxy-D-xylulose 5-phosphate. Residue Arg17 participates in 3-amino-2-oxopropyl phosphate binding. Residue His43 is the Proton acceptor of the active site. The 1-deoxy-D-xylulose 5-phosphate site is built by Arg45 and His50. The active-site Proton acceptor is the Glu70. Residue Thr102 participates in 1-deoxy-D-xylulose 5-phosphate binding. Catalysis depends on His215, which acts as the Proton donor. 3-amino-2-oxopropyl phosphate-binding positions include Gly216 and 237 to 238 (GH).

Belongs to the PNP synthase family. In terms of assembly, homooctamer; tetramer of dimers.

It is found in the cytoplasm. It carries out the reaction 3-amino-2-oxopropyl phosphate + 1-deoxy-D-xylulose 5-phosphate = pyridoxine 5'-phosphate + phosphate + 2 H2O + H(+). The protein operates within cofactor biosynthesis; pyridoxine 5'-phosphate biosynthesis; pyridoxine 5'-phosphate from D-erythrose 4-phosphate: step 5/5. In terms of biological role, catalyzes the complicated ring closure reaction between the two acyclic compounds 1-deoxy-D-xylulose-5-phosphate (DXP) and 3-amino-2-oxopropyl phosphate (1-amino-acetone-3-phosphate or AAP) to form pyridoxine 5'-phosphate (PNP) and inorganic phosphate. This chain is Pyridoxine 5'-phosphate synthase, found in Helicobacter pylori (strain Shi470).